Here is a 440-residue protein sequence, read N- to C-terminus: Serine/threonine-protein kinase 2 (440 aa).

Residues 85 to 440 form the Protein kinase domain; the sequence is NDDFYHISTG…FSNWINGESC (356 aa). Residues 91-99 and Lys115 contribute to the ATP site; that span reads ISTGGYGIV. The Proton acceptor role is filled by Asp306.

Belongs to the protein kinase superfamily. Ser/Thr protein kinase family. Poxviruses subfamily. Post-translationally, phosphorylated in vivo. Autophosphorylated in vitro.

Its subcellular location is the host endoplasmic reticulum. It is found in the host endoplasmic reticulum-Golgi intermediate compartment. The catalysed reaction is L-seryl-[protein] + ATP = O-phospho-L-seryl-[protein] + ADP + H(+). The enzyme catalyses L-threonyl-[protein] + ATP = O-phospho-L-threonyl-[protein] + ADP + H(+). In terms of biological role, essential serine-protein kinase involved in the early stage of virion morphogenesis. The polypeptide is Serine/threonine-protein kinase 2 (OPG054) (Sus scrofa (Pig)).